We begin with the raw amino-acid sequence, 295 residues long: N-acetylmuramic acid 6-phosphate etherase (295 aa).

Positions 54 to 217 (VIAAFRRGGR…STASMVGIGK (164 aa)) constitute an SIS domain. E82 (proton donor) is an active-site residue. The active site involves E113.

Belongs to the GCKR-like family. MurNAc-6-P etherase subfamily. Homodimer.

It carries out the reaction N-acetyl-D-muramate 6-phosphate + H2O = N-acetyl-D-glucosamine 6-phosphate + (R)-lactate. It participates in amino-sugar metabolism; N-acetylmuramate degradation. Specifically catalyzes the cleavage of the D-lactyl ether substituent of MurNAc 6-phosphate, producing GlcNAc 6-phosphate and D-lactate. In Geobacillus thermodenitrificans (strain NG80-2), this protein is N-acetylmuramic acid 6-phosphate etherase.